The chain runs to 425 residues: MMGKLPLGVVSPYVKMSSGGYTDPLKFYATSYCTAYGREDFKPRVGSHVGTGYKSNFQPVVSCQASLEALDNPARGEQAQDHFQSVASQSYRPLEVPDGKHPLPWSMRQTSSGYGREKPSAGPPTKEVRKVHFDTQEHGPQAITGLEPREVPLLHQQQGQDPLERENFRHGPRFMTSEYNSKYLRDPLDQPDFLQKKSIGAKEGSGFTKQSHQSPIVFQPPSQALPGDPALLPGQSVTKSDFLPKTHLHGDEFLPVLARGSKRETAFSRGNERILNPRVPPPCPEPSSVSHQQFQPLHRMQQTNVALLGRETVGKKEPTGFSLNNPMYVRSPCDPDRDQRYLTTYNQGYFENIPKGLDQEGWTRGGIQPQMPGGYALSQPVSCMEATPNPMESLRHLHPHVGRTLTSADPFYQNTPHSSRCVAHS.

Disordered stretches follow at residues 93 to 126, 203 to 225, and 316 to 335; these read PLEVPDGKHPLPWSMRQTSSGYGREKPSAGPPTK, EGSGFTKQSHQSPIVFQPPSQAL, and KEPTGFSLNNPMYVRSPCDP. Residues 207 to 222 show a composition bias toward polar residues; sequence FTKQSHQSPIVFQPPS.

As to quaternary structure, microtubule inner protein component of sperm flagellar doublet microtubules. Interacts with PPP1CA.

The protein resides in the cell projection. It localises to the cilium. The protein localises to the cytoplasm. It is found in the cytoskeleton. Its subcellular location is the flagellum axoneme. The protein is Stabilizer of axonemal microtubules 4 of Homo sapiens (Human).